The following is a 193-amino-acid chain: ATP-dependent Clp protease proteolytic subunit 2 (193 aa).

The active-site Nucleophile is Ser98. His123 is an active-site residue.

It belongs to the peptidase S14 family. As to quaternary structure, fourteen ClpP subunits assemble into 2 heptameric rings which stack back to back to give a disk-like structure with a central cavity, resembling the structure of eukaryotic proteasomes.

The protein resides in the cytoplasm. It carries out the reaction Hydrolysis of proteins to small peptides in the presence of ATP and magnesium. alpha-casein is the usual test substrate. In the absence of ATP, only oligopeptides shorter than five residues are hydrolyzed (such as succinyl-Leu-Tyr-|-NHMec, and Leu-Tyr-Leu-|-Tyr-Trp, in which cleavage of the -Tyr-|-Leu- and -Tyr-|-Trp bonds also occurs).. Its function is as follows. Cleaves peptides in various proteins in a process that requires ATP hydrolysis. Has a chymotrypsin-like activity. Plays a major role in the degradation of misfolded proteins. In Bacillus anthracis, this protein is ATP-dependent Clp protease proteolytic subunit 2.